Consider the following 263-residue polypeptide: Methylesterase 4 (263 aa).

S84 (acyl-ester intermediate) is an active-site residue. Catalysis depends on charge relay system residues D213 and H241.

It belongs to the AB hydrolase superfamily. Methylesterase family.

The catalysed reaction is methyl salicylate + H2O = salicylate + methanol + H(+). The protein operates within plant hormone biosynthesis. Its activity is regulated as follows. Esterase activity is down-regulated by salicylic acid (SA). In terms of biological role, methylesterase shown to have carboxylesterase activity and methyl salicylate (MeSA) esterase activity in vitro. This Arabidopsis thaliana (Mouse-ear cress) protein is Methylesterase 4.